Consider the following 458-residue polypeptide: GTPase Obg (458 aa).

The region spanning 1 to 157 (MSFLDRVKIY…ITLYLELKVL (157 aa)) is the Obg domain. The 169-residue stretch at 158–326 (ADLGLVGFPN…VLNEIVKVIS (169 aa)) folds into the OBG-type G domain. GTP is bound by residues 164–171 (GFPNAGKS), 189–193 (FTTLN), 210–213 (DIPG), 280–283 (NKAD), and 307–309 (SAA). Residues serine 171 and threonine 191 each contribute to the Mg(2+) site. In terms of domain architecture, OCT spans 341 to 419 (AVHGVEPLFK…VGQKEFEWSG (79 aa)). The interval 420-458 (TELDSERAEQPDFEGYKRRTTQAERLEKRRQRRLKKEEK) is disordered. Positions 423–446 (DSERAEQPDFEGYKRRTTQAERLE) are enriched in basic and acidic residues. Residues 447 to 458 (KRRQRRLKKEEK) show a composition bias toward basic residues.

It belongs to the TRAFAC class OBG-HflX-like GTPase superfamily. OBG GTPase family. In terms of assembly, monomer. The cofactor is Mg(2+).

Its subcellular location is the cytoplasm. An essential GTPase which binds GTP, GDP and possibly (p)ppGpp with moderate affinity, with high nucleotide exchange rates and a fairly low GTP hydrolysis rate. Plays a role in control of the cell cycle, stress response, ribosome biogenesis and in those bacteria that undergo differentiation, in morphogenesis control. The chain is GTPase Obg from Elusimicrobium minutum (strain Pei191).